A 114-amino-acid polypeptide reads, in one-letter code: UPF0145 protein SSO1976 (114 aa).

The protein belongs to the UPF0145 family.

The sequence is that of UPF0145 protein SSO1976 from Saccharolobus solfataricus (strain ATCC 35092 / DSM 1617 / JCM 11322 / P2) (Sulfolobus solfataricus).